The following is a 152-amino-acid chain: RxLR effector protein Avrblb1 (152 aa).

The signal sequence occupies residues 1-24 (MRSLLLTVLLNLVVLLATTGAVSS). The RxLR-dEER motif lies at 51 to 72 (RSLRGDYNNEVTKEPNTSDEER). Positions 54–56 (RGD) match the RGD RLK-binding motif motif. Asn-66 carries N-linked (GlcNAc...) asparagine glycosylation. Residues 99-152 (QSKTVLRYEDKLFTALYKSGETPRSLRTKHLDKASASVFFNRFKKWYDKNVGPS) are w motif.

The protein belongs to the RxLR effector family. In terms of assembly, interacts with host defense protein RGA2/Rpi-blb1. Interacts with host legume-type lectin receptor kinase LECRK19.

Its subcellular location is the secreted. It localises to the host nucleus. The protein resides in the host nucleolus. The protein localises to the host cell membrane. Its function is as follows. Secreted effector that acts as an elicitor of hypersensitive response (HR) specifically on plants carrying defense protein RGA2/Rpi-blb1. Enhances P.infestans colonization of plant hosts Nicotiana benthamiana and potato Solanum bulbocastanum leaves. Associates with host legume-type lectin receptor kinases and disrupts attachments between the host plasma membrane and cell wall. This is RxLR effector protein Avrblb1 from Phytophthora infestans (strain T30-4) (Potato late blight agent).